The primary structure comprises 756 residues: Catalase-peroxidase (756 aa).

A cross-link (tryptophyl-tyrosyl-methioninium (Trp-Tyr) (with M-270)) is located at residues 91–244 (WHSAGTYRTG…LAAVQMGLIY (154 aa)). The Proton acceptor role is filled by histidine 92. A disordered region spans residues 198-230 (AQKKMQQPGDGTLVAEPENHANEESRTASGERN). The segment covering 214 to 223 (PENHANEESR) has biased composition (basic and acidic residues). The tryptophyl-tyrosyl-methioninium (Tyr-Met) (with W-91) cross-link spans 244–270 (YVNPEGPEGVPDPVASARDIRETFGRM). Histidine 285 serves as a coordination point for heme b.

This sequence belongs to the peroxidase family. Peroxidase/catalase subfamily. As to quaternary structure, homodimer or homotetramer. Requires heme b as cofactor. Formation of the three residue Trp-Tyr-Met cross-link is important for the catalase, but not the peroxidase activity of the enzyme.

The catalysed reaction is H2O2 + AH2 = A + 2 H2O. The enzyme catalyses 2 H2O2 = O2 + 2 H2O. Functionally, bifunctional enzyme with both catalase and broad-spectrum peroxidase activity. The polypeptide is Catalase-peroxidase (Pseudomonas syringae pv. syringae (strain B728a)).